A 151-amino-acid polypeptide reads, in one-letter code: Anti-CBASS protein Acb1 (151 aa).

Residue tyrosine 13 participates in 3',3'-cGAMP binding. Residue tyrosine 13 participates in 3',3'-cUAMP binding. Catalysis depends on residues histidine 45 and threonine 47. 3',3'-cGAMP is bound at residue tyrosine 108. Tyrosine 108 is a 3',3'-cUAMP binding site. Catalysis depends on residues histidine 114 and threonine 116. 2 residues coordinate 3',3'-cGAMP: glutamate 140 and tryptophan 146. 3',3'-cUAMP contacts are provided by glutamate 140 and tryptophan 146.

The protein belongs to the anti-CBASS protein Acb1 family.

It carries out the reaction 3',3'-cUAMP + H2O = U[3'-5']pAp[3'] + H(+). The catalysed reaction is 3',3',3'-c-tri-AMP + H2O = A[3'-5']pA[3'-5']pAp[3'] + H(+). The enzyme catalyses 3',3',3'-cAAG + H2O = G[3'-5']pA[3'-5']pAp[3'] + H(+). It catalyses the reaction 3',3',3'-cAAG + H2O = A[3'-5']pG[3'-5']pAp[3'] + H(+). It carries out the reaction 3',3'-cGAMP + H2O = G[3'-5']pAp[3'] + H(+). Functionally, counteracts the host CBASS antiviral defense system. Phosphodiesterase that enables metal-independent hydrolysis of the host cyclic di- and trinucleotide CBASS signals such as 3'3'-cGAMP, 3'3'cUA, and 3'3'3'-cAAA. Does not cleave cGG or cA4. Besides evasion of the CBASS system, might also enable evasion of the type III CRISPR systems that use cA3 signals. This Vibrio phage KVP40 (isolate Vibrio parahaemolyticus/Japan/Matsuzaki/1991) (KVP40) protein is Anti-CBASS protein Acb1.